We begin with the raw amino-acid sequence, 587 residues long: Pyruvate decarboxylase 3 (587 aa).

Positions 48 and 135 each coordinate substrate. Residues 415-496 are thiamine pyrophosphate binding; the sequence is DSWFNCQKLR…FLINNGGYTI (82 aa). Positions 464, 491, and 493 each coordinate Mg(2+). Glutamate 497 serves as a coordination point for substrate.

The protein belongs to the TPP enzyme family. In terms of assembly, homotetramer. The cofactor is a metal cation. Requires thiamine diphosphate as cofactor.

It catalyses the reaction a 2-oxocarboxylate + H(+) = an aldehyde + CO2. The protein is Pyruvate decarboxylase 3 (PDC3) of Oryza sativa subsp. indica (Rice).